Consider the following 226-residue polypeptide: Glutathione S-transferase kappa 1 (226 aa).

Residue 16–18 (SPY) participates in glutathione binding. Residue K49 is modified to N6-succinyllysine. A glutathione-binding site is contributed by N53. Residues K71 and K85 each carry the N6-acetyllysine modification. An N6-acetyllysine; alternate modification is found at K116. Residue K116 is modified to N6-succinyllysine; alternate. K144 carries the post-translational modification N6-succinyllysine. N6-acetyllysine; alternate is present on K158. K158 is subject to N6-succinyllysine; alternate. N6-acetyllysine occurs at positions 165 and 169. Glutathione-binding positions include L183 and 200-201 (SD).

It belongs to the GST superfamily. Kappa family. As to quaternary structure, homodimer. As to expression, ubiquitous.

The protein resides in the peroxisome. The enzyme catalyses RX + glutathione = an S-substituted glutathione + a halide anion + H(+). In terms of biological role, glutathione S-transferase that catalyzes the conjugation of glutathione to exogenous and endogenous compounds. Significant glutathione conjugating activity is found only with the model substrate, 1-chloro-2,4-dinitrobenzene (CDNB). This chain is Glutathione S-transferase kappa 1 (GSTK1), found in Homo sapiens (Human).